A 106-amino-acid polypeptide reads, in one-letter code: NADH dehydrogenase [ubiquinone] 1 beta subcomplex subunit 9 (106 aa).

This sequence belongs to the complex I LYR family. Complex I is composed of about 45 different subunits.

The protein resides in the mitochondrion inner membrane. Accessory subunit of the mitochondrial membrane respiratory chain NADH dehydrogenase (Complex I), that is believed to be not involved in catalysis. Complex I functions in the transfer of electrons from NADH to the respiratory chain. The immediate electron acceptor for the enzyme is believed to be ubiquinone. The sequence is that of NADH dehydrogenase [ubiquinone] 1 beta subcomplex subunit 9 (ndufb9) from Dictyostelium discoideum (Social amoeba).